Reading from the N-terminus, the 132-residue chain is S-adenosylmethionine decarboxylase proenzyme (132 aa).

The Schiff-base intermediate with substrate; via pyruvic acid role is filled by Ser-65. Residue Ser-65 is modified to Pyruvic acid (Ser); by autocatalysis. His-70 serves as the catalytic Proton acceptor; for processing activity. Cys-85 acts as the Proton donor; for catalytic activity in catalysis.

This sequence belongs to the prokaryotic AdoMetDC family. Type 1 subfamily. Heterotetramer of two alpha and two beta chains arranged as a dimer of alpha/beta heterodimers. Pyruvate serves as cofactor. Is synthesized initially as an inactive proenzyme. Formation of the active enzyme involves a self-maturation process in which the active site pyruvoyl group is generated from an internal serine residue via an autocatalytic post-translational modification. Two non-identical subunits are generated from the proenzyme in this reaction, and the pyruvate is formed at the N-terminus of the alpha chain, which is derived from the carboxyl end of the proenzyme. The post-translation cleavage follows an unusual pathway, termed non-hydrolytic serinolysis, in which the side chain hydroxyl group of the serine supplies its oxygen atom to form the C-terminus of the beta chain, while the remainder of the serine residue undergoes an oxidative deamination to produce ammonia and the pyruvoyl group blocking the N-terminus of the alpha chain.

It catalyses the reaction S-adenosyl-L-methionine + H(+) = S-adenosyl 3-(methylsulfanyl)propylamine + CO2. The protein operates within amine and polyamine biosynthesis; S-adenosylmethioninamine biosynthesis; S-adenosylmethioninamine from S-adenosyl-L-methionine: step 1/1. In terms of biological role, catalyzes the decarboxylation of S-adenosylmethionine to S-adenosylmethioninamine (dcAdoMet), the propylamine donor required for the synthesis of the polyamines spermine and spermidine from the diamine putrescine. This Symbiobacterium thermophilum (strain DSM 24528 / JCM 14929 / IAM 14863 / T) protein is S-adenosylmethionine decarboxylase proenzyme.